The following is a 194-amino-acid chain: Holliday junction branch migration complex subunit RuvA (194 aa).

Positions 1–64 are domain I; sequence MIGRLRGILA…EDSVSLYGFL (64 aa). The interval 65–140 is domain II; the sequence is REGERRLFRD…RAADFSSGAP (76 aa). The segment at 140–144 is flexible linker; the sequence is PITGQ. The interval 145-194 is domain III; sequence LGPDAISEATVALQQLGYKPAEAARMARDAGAEGGEVATVIRKALQAALR.

It belongs to the RuvA family. Homotetramer. Forms an RuvA(8)-RuvB(12)-Holliday junction (HJ) complex. HJ DNA is sandwiched between 2 RuvA tetramers; dsDNA enters through RuvA and exits via RuvB. An RuvB hexamer assembles on each DNA strand where it exits the tetramer. Each RuvB hexamer is contacted by two RuvA subunits (via domain III) on 2 adjacent RuvB subunits; this complex drives branch migration. In the full resolvosome a probable DNA-RuvA(4)-RuvB(12)-RuvC(2) complex forms which resolves the HJ.

It is found in the cytoplasm. Functionally, the RuvA-RuvB-RuvC complex processes Holliday junction (HJ) DNA during genetic recombination and DNA repair, while the RuvA-RuvB complex plays an important role in the rescue of blocked DNA replication forks via replication fork reversal (RFR). RuvA specifically binds to HJ cruciform DNA, conferring on it an open structure. The RuvB hexamer acts as an ATP-dependent pump, pulling dsDNA into and through the RuvAB complex. HJ branch migration allows RuvC to scan DNA until it finds its consensus sequence, where it cleaves and resolves the cruciform DNA. This is Holliday junction branch migration complex subunit RuvA from Xanthomonas oryzae pv. oryzae (strain MAFF 311018).